Reading from the N-terminus, the 108-residue chain is MVNLGLSRVDDAVASKHPGLGEYAACQSNAFVKGVSTFVTGTGATFGLQMLVQRKLPYPFQWKVLLAVVAGSVASYWVTRVESQKCSNLWLFLETGQLPKDMGTDRRS.

Helical transmembrane passes span 34-52 (GVST…QMLV) and 62-78 (WKVL…SYWV).

Belongs to the TMEM141 family.

It localises to the membrane. The sequence is that of Transmembrane protein 141 (TMEM141) from Bos taurus (Bovine).